A 273-amino-acid chain; its full sequence is Putative pyruvate, phosphate dikinase regulatory protein (273 aa).

An ADP-binding site is contributed by 149-156; the sequence is GPSRTSKT.

Belongs to the pyruvate, phosphate/water dikinase regulatory protein family. PDRP subfamily.

It carries out the reaction N(tele)-phospho-L-histidyl/L-threonyl-[pyruvate, phosphate dikinase] + ADP = N(tele)-phospho-L-histidyl/O-phospho-L-threonyl-[pyruvate, phosphate dikinase] + AMP + H(+). The catalysed reaction is N(tele)-phospho-L-histidyl/O-phospho-L-threonyl-[pyruvate, phosphate dikinase] + phosphate + H(+) = N(tele)-phospho-L-histidyl/L-threonyl-[pyruvate, phosphate dikinase] + diphosphate. Its function is as follows. Bifunctional serine/threonine kinase and phosphorylase involved in the regulation of the pyruvate, phosphate dikinase (PPDK) by catalyzing its phosphorylation/dephosphorylation. The protein is Putative pyruvate, phosphate dikinase regulatory protein of Rickettsia akari (strain Hartford).